The primary structure comprises 345 residues: Cytoskeleton protein RodZ (345 aa).

The Cytoplasmic segment spans residues 1–111 (MNTEASQDQT…LGKKHKKRDG (111 aa)). Positions 19–79 (LRQARESLGL…KLVHLPEDEL (61 aa)) constitute an HTH cro/C1-type domain. The segment at residues 30-49 (QQTVAERLCLKVSTIRDIEE) is a DNA-binding region (H-T-H motif). A helical; Signal-anchor for type II membrane protein transmembrane segment spans residues 112–132 (WLMSFTWLIVLVVLGLTGAWW). Topologically, residues 133–345 (WQNHQAQQAE…RVARLTVCVE (213 aa)) are periplasmic. Residues 151–259 (SAQLSQNGGQ…PLPTADAGVS (109 aa)) form a disordered region. Polar residues predominate over residues 188 to 225 (PLTNHSGSAITNSATTSSVPKTTSTEPVDTANTNTTMH). A compositionally biased stretch (low complexity) spans 229–241 (AASAAVSPSQVPQ).

The protein belongs to the RodZ family.

It localises to the cell inner membrane. Functionally, cytoskeletal protein that is involved in cell-shape control through regulation of the length of the long axis. The sequence is that of Cytoskeleton protein RodZ from Yersinia pestis bv. Antiqua (strain Antiqua).